The following is a 135-amino-acid chain: Lysozyme 2 (135 aa).

An N-terminal signal peptide occupies residues 1–18; sequence MNFLILFCVVASASVVYS. The I-type lysozyme domain occupies 19 to 135; it reads SISDQCLRCI…WRLVQAKGCS (117 aa). 6 disulfide bridges follow: Cys24-Cys100, Cys29-Cys35, Cys40-Cys49, Cys62-Cys82, Cys72-Cys78, and Cys96-Cys114. Glu32 acts as the Proton donor in catalysis. Asp43 functions as the Nucleophile in the catalytic mechanism. Substrate is bound at residue 55 to 61; that stretch reads KQGYWTD. Residues Tyr86 and 107 to 109 contribute to the substrate site; that span reads HNG.

In terms of tissue distribution, expressed in the epithelia of the basophil cells in the digestive tubules, but not in the epithelial cells lining the digestive ducts and stomach. Expressed at a much lower level in the style sac-midgut tissues. No expression detected in mantle, gills, labial palps or hemocytes.

The protein resides in the secreted. The catalysed reaction is Hydrolysis of (1-&gt;4)-beta-linkages between N-acetylmuramic acid and N-acetyl-D-glucosamine residues in a peptidoglycan and between N-acetyl-D-glucosamine residues in chitodextrins.. Its activity is regulated as follows. Activity decreased by 80% by addition of 0.01 M calcium, zinc or magnesium. Activity only decreased by 17% by addition of ammonium, and by 2% by addition of sodium. In terms of biological role, the main role of this lysozyme is in digestion. Has antibacterial activity against the Gram-positive bacterium P.cerevisiae and the Gram-negative bacteria E.coli and V.vulnificus. Shows some chitinase activity but no isopeptidase activity. This Crassostrea virginica (Eastern oyster) protein is Lysozyme 2.